The sequence spans 669 residues: MAAERSRSPMESPVPASMFAPEPSSPGAARAAAAAARLHGGFDSDCSEDGEALNGEPELDLTSKLVLVSPTSEQYDSLLRQMWERMDEGCGETIYVIGQGSDGTEYGLSEADMEASYATVKSMAEQIEADVILLRERQEAGGRVRDYLVRKRVGDNDFLEVRVAVVGNVDAGKSTLLGVLTHGELDNGRGFARQKLFRHKHEIESGRTSSVGNDILGFDSEGNVVNKPDSHGGSLEWTKICEKSTKVITFIDLAGHEKYLKTTVFGMTGHLPDFCMLMVGSNAGIVGMTKEHLGLALALNVPVFVVVTKIDMCPANILQETLKLLQRLLKSPGCRKIPVLVQSKDDVIVTASNFSSERMCPIFQISNVTGENLDLLKMFLNLLSPRTSYREEEPAEFQIDDTYSVPGVGTVVSGTTLRGLIKLNDTLLLGPDPLGNFLSIAVKSIHRKRMPVKEVRGGQTASFALKKIKRSSIRKGMVMVSPRLNPQASWEFEAEILVLHHPTTISPRYQAMVHCGSIRQTATILSMDKDCLRTGDKATVHFRFIKTPEYLHIDQRLVFREGRTKAVGTITKLLQTTNNSPMNSKPQQIKMQSTKKGPLPKREEGGPSGGPTVGGPPPGDEACSLGATQLAASSSLQPQPKPSSGGRRRGGQRHKVKSQGACMTPASGC.

Positions 1–32 (MAAERSRSPMESPVPASMFAPEPSSPGAARAA) are disordered. Residues serine 6, serine 8, serine 12, serine 24, serine 25, serine 44, serine 47, and serine 69 each carry the phosphoserine modification. Positions 158 to 389 (FLEVRVAVVG…LNLLSPRTSY (232 aa)) constitute a tr-type G domain. The interval 167–174 (GNVDAGKS) is G1. 167-174 (GNVDAGKS) provides a ligand contact to GTP. The tract at residues 206-210 (GRTSS) is G2. A G3 region spans residues 252 to 255 (DLAG). GTP contacts are provided by residues 252–256 (DLAGH) and 308–311 (TKID). Positions 308–311 (TKID) are G4. A G5 region spans residues 366-368 (SNV). Residues 573-595 (LLQTTNNSPMNSKPQQIKMQSTK) show a composition bias toward polar residues. Positions 573–669 (LLQTTNNSPM…GACMTPASGC (97 aa)) are disordered. Residue serine 580 is modified to Phosphoserine. Positions 633–645 (SSSLQPQPKPSSG) are enriched in low complexity. Basic residues predominate over residues 646–657 (GRRRGGQRHKVK).

The protein belongs to the TRAFAC class translation factor GTPase superfamily. Classic translation factor GTPase family. GTPBP1 subfamily. In terms of assembly, interacts with EXOSC2/RRP4, EXOSC3/RRP40, EXOSC5/RRP46, HNRNPD, HNRNPR and SYNCRIP. Identified in a complex with AANAT mRNA, but does not bind mRNA by itself.

It is found in the cytoplasm. Its function is as follows. Promotes degradation of target mRNA species. Plays a role in the regulation of circadian mRNA stability. Binds GTP and has GTPase activity. In Bos taurus (Bovine), this protein is GTP-binding protein 1 (GTPBP1).